Consider the following 87-residue polypeptide: Large ribosomal subunit protein bL31B (87 aa).

The protein belongs to the bacterial ribosomal protein bL31 family. Type B subfamily. As to quaternary structure, part of the 50S ribosomal subunit.

This Pseudomonas aeruginosa (strain LESB58) protein is Large ribosomal subunit protein bL31B.